Here is a 693-residue protein sequence, read N- to C-terminus: Ion-translocating oxidoreductase complex subunit C (693 aa).

4Fe-4S ferredoxin-type domains lie at 368–397 and 407–436; these read MEPVAEEQSCIRCSKCADACPAGLLPQQLY and KARDHHLFDCIECGACAYVCPSNIPLVQYY. [4Fe-4S] cluster-binding residues include cysteine 377, cysteine 380, cysteine 383, cysteine 387, cysteine 416, cysteine 419, cysteine 422, and cysteine 426. Over residues 539–548 the composition is skewed to basic and acidic residues; that stretch reads REERVREKQS. The interval 539 to 564 is disordered; that stretch reads REERVREKQSQQETPATEVTPEELDP.

It belongs to the 4Fe4S bacterial-type ferredoxin family. RnfC subfamily. As to quaternary structure, the complex is composed of six subunits: RnfA, RnfB, RnfC, RnfD, RnfE and RnfG. [4Fe-4S] cluster serves as cofactor.

The protein localises to the cell inner membrane. Part of a membrane-bound complex that couples electron transfer with translocation of ions across the membrane. This is Ion-translocating oxidoreductase complex subunit C from Pectobacterium atrosepticum (strain SCRI 1043 / ATCC BAA-672) (Erwinia carotovora subsp. atroseptica).